The primary structure comprises 119 residues: Large ribosomal subunit protein uL18 (119 aa).

The protein belongs to the universal ribosomal protein uL18 family. In terms of assembly, part of the 50S ribosomal subunit; part of the 5S rRNA/L5/L18/L25 subcomplex. Contacts the 5S and 23S rRNAs.

This is one of the proteins that bind and probably mediate the attachment of the 5S RNA into the large ribosomal subunit, where it forms part of the central protuberance. The chain is Large ribosomal subunit protein uL18 from Anaeromyxobacter dehalogenans (strain 2CP-C).